The chain runs to 227 residues: 7-cyano-7-deazaguanine synthase (227 aa).

9–19 contributes to the ATP binding site; sequence LSGGLDSATVL. Zn(2+)-binding residues include Cys189, Cys199, Cys202, and Cys205.

Belongs to the QueC family. Zn(2+) serves as cofactor.

It catalyses the reaction 7-carboxy-7-deazaguanine + NH4(+) + ATP = 7-cyano-7-deazaguanine + ADP + phosphate + H2O + H(+). It participates in purine metabolism; 7-cyano-7-deazaguanine biosynthesis. Functionally, catalyzes the ATP-dependent conversion of 7-carboxy-7-deazaguanine (CDG) to 7-cyano-7-deazaguanine (preQ(0)). This Cupriavidus necator (strain ATCC 17699 / DSM 428 / KCTC 22496 / NCIMB 10442 / H16 / Stanier 337) (Ralstonia eutropha) protein is 7-cyano-7-deazaguanine synthase.